Here is an 81-residue protein sequence, read N- to C-terminus: Large ribosomal subunit protein bL31B (81 aa).

This sequence belongs to the bacterial ribosomal protein bL31 family. Type B subfamily. Part of the 50S ribosomal subunit.

In Pediococcus pentosaceus (strain ATCC 25745 / CCUG 21536 / LMG 10740 / 183-1w), this protein is Large ribosomal subunit protein bL31B.